A 109-amino-acid polypeptide reads, in one-letter code: Large ribosomal subunit protein uL24 (109 aa).

It belongs to the universal ribosomal protein uL24 family. As to quaternary structure, part of the 50S ribosomal subunit.

One of two assembly initiator proteins, it binds directly to the 5'-end of the 23S rRNA, where it nucleates assembly of the 50S subunit. Its function is as follows. One of the proteins that surrounds the polypeptide exit tunnel on the outside of the subunit. This is Large ribosomal subunit protein uL24 from Rickettsia canadensis (strain McKiel).